The chain runs to 1254 residues: Juxtamembrane domain-associated catenin (1254 aa).

3 disordered regions span residues 1–38, 84–106, and 145–209; these read MISSGWMQEMEPIPEEGTEADGSEWGAMSDTAKRTMRK, AGPTSARGSSYSYSYESHYDNPP, and PYSN…SAPG. The segment covering 12 to 22 has biased composition (acidic residues); that stretch reads PIPEEGTEADG. Polar residues predominate over residues 145-157; that stretch reads PYSNIDFDSSGLP. Fibronectin type-III domains follow at residues 207-302, 315-411, 428-518, and 530-624; these read APGV…IPIS, APGR…IRPA, PPGQ…LRPT, and ILEA…IEPS. Residues 412–433 form a disordered region; it reads APQRHVPARKVSESVQPPGQPQ. The interval 662–685 is disordered; sequence MVRESPPLPERDDSPPPLRRANNN. ARM repeat units lie at residues 733–775, 777–820, 874–922, 969–1012, and 1016–1058; these read GGIP…AVME, DGVR…ESAT, NLIE…YDPA, HVVK…RAAV, and KGLP…KYAL. A disordered region spans residues 920–960; it reads DPAAAHSSSSKNMKHVASPKPEKKKKDKEKKKDKNPKNIVT. The disordered stretch occupies residues 1159–1254; sequence GTARRGDSST…GGGNIDDSWV (96 aa). The span at 1166 to 1176 shows a compositional bias: polar residues; that stretch reads SSTLARPISSQ. Basic and acidic residues predominate over residues 1177 to 1187; the sequence is GRERPSMHQLD.

It belongs to the beta-catenin family. In terms of assembly, associated with the catenin-cadherin complex consisting of hmr-1, hmp-1 and hmp-2. Interacts with hmr-1. Interacts with picc-1. As to expression, epidermal cells.

Its subcellular location is the cell junction. The protein localises to the adherens junction. It is found in the nucleus. In terms of biological role, may act as a positive modulator of hmr-1 function during epidermal morphogenesis. Required for proper localization of other junctional components, such as pac-1. The chain is Juxtamembrane domain-associated catenin (jac-1) from Caenorhabditis elegans.